Consider the following 151-residue polypeptide: MGRLHSKGKGISSSALPYRRTAPSWLKISSQDVDETICKFAKKGLTPSQIGVILRDSHGIAQVKSVTGSKILRILKAHGLAPEIPEDLYHLIKKAVSIRKHLERFRKDKDSKFRLILVESRIHRLARYYKKTKKLPPVWKYESTTASTLVA.

Belongs to the universal ribosomal protein uS15 family.

In Pisum sativum (Garden pea), this protein is Small ribosomal subunit protein uS15 (RPS13).